A 157-amino-acid chain; its full sequence is Protein PEROXIN-4 (157 aa).

Residues 3–153 (ASRARLFKEY…AQMYTRLAAM (151 aa)) enclose the UBC core domain. Cys90 (glycyl thioester intermediate) is an active-site residue.

It belongs to the ubiquitin-conjugating enzyme family. In terms of assembly, interacts with PEX22.

The protein resides in the peroxisome membrane. It catalyses the reaction S-ubiquitinyl-[E1 ubiquitin-activating enzyme]-L-cysteine + [E2 ubiquitin-conjugating enzyme]-L-cysteine = [E1 ubiquitin-activating enzyme]-L-cysteine + S-ubiquitinyl-[E2 ubiquitin-conjugating enzyme]-L-cysteine.. It participates in protein modification; protein ubiquitination. Functionally, required for peroxisome biogenesis. Necessary for the developmental elimination of obsolete peroxisome matrix proteins. May be involved in the ubiquitination of PEX5, targeting it for recycling. Accepts the ubiquitin from the E1 complex and catalyzes its covalent attachment to other proteins. The sequence is that of Protein PEROXIN-4 (PEX4) from Arabidopsis thaliana (Mouse-ear cress).